Here is an 83-residue protein sequence, read N- to C-terminus: Small ribosomal subunit protein eS21 (83 aa).

It belongs to the eukaryotic ribosomal protein eS21 family. In terms of assembly, component of the 40S small ribosomal subunit.

It is found in the cytoplasm. The protein localises to the cytosol. Its subcellular location is the rough endoplasmic reticulum. Functionally, component of the small ribosomal subunit. The ribosome is a large ribonucleoprotein complex responsible for the synthesis of proteins in the cell. The protein is Small ribosomal subunit protein eS21 (rps21) of Ictalurus punctatus (Channel catfish).